The sequence spans 445 residues: Phosphoglucosamine mutase (445 aa).

The active-site Phosphoserine intermediate is the serine 102. Mg(2+) contacts are provided by serine 102, aspartate 241, aspartate 243, and aspartate 245. Residue serine 102 is modified to Phosphoserine.

It belongs to the phosphohexose mutase family. It depends on Mg(2+) as a cofactor. In terms of processing, activated by phosphorylation.

The catalysed reaction is alpha-D-glucosamine 1-phosphate = D-glucosamine 6-phosphate. In terms of biological role, catalyzes the conversion of glucosamine-6-phosphate to glucosamine-1-phosphate. The protein is Phosphoglucosamine mutase of Shewanella piezotolerans (strain WP3 / JCM 13877).